Here is a 616-residue protein sequence, read N- to C-terminus: 2-isopropylmalate synthase (616 aa).

A disordered region spans residues M1–S34. The region spanning P67–R341 is the Pyruvate carboxyltransferase domain. Mg(2+)-binding residues include D76, H280, H282, and N316. A regulatory domain region spans residues R490–V616.

The protein belongs to the alpha-IPM synthase/homocitrate synthase family. LeuA type 2 subfamily. As to quaternary structure, homodimer. Requires Mg(2+) as cofactor.

It is found in the cytoplasm. The enzyme catalyses 3-methyl-2-oxobutanoate + acetyl-CoA + H2O = (2S)-2-isopropylmalate + CoA + H(+). The protein operates within amino-acid biosynthesis; L-leucine biosynthesis; L-leucine from 3-methyl-2-oxobutanoate: step 1/4. Catalyzes the condensation of the acetyl group of acetyl-CoA with 3-methyl-2-oxobutanoate (2-ketoisovalerate) to form 3-carboxy-3-hydroxy-4-methylpentanoate (2-isopropylmalate). The polypeptide is 2-isopropylmalate synthase (Corynebacterium glutamicum (strain R)).